Reading from the N-terminus, the 377-residue chain is Histidinol-phosphate aminotransferase 2 (377 aa).

Residues 17-44 (NLSPYVPGEQPQHDDLCKLNTNENPFPP) form a disordered region. Lys-228 is subject to N6-(pyridoxal phosphate)lysine.

The protein belongs to the class-II pyridoxal-phosphate-dependent aminotransferase family. Histidinol-phosphate aminotransferase subfamily. Homodimer. The cofactor is pyridoxal 5'-phosphate.

It carries out the reaction L-histidinol phosphate + 2-oxoglutarate = 3-(imidazol-4-yl)-2-oxopropyl phosphate + L-glutamate. Its pathway is amino-acid biosynthesis; L-histidine biosynthesis; L-histidine from 5-phospho-alpha-D-ribose 1-diphosphate: step 7/9. This Psychrobacter arcticus (strain DSM 17307 / VKM B-2377 / 273-4) protein is Histidinol-phosphate aminotransferase 2.